Reading from the N-terminus, the 656-residue chain is Chaperone protein DnaK (656 aa).

Thr204 carries the post-translational modification Phosphothreonine; by autocatalysis. Residues 607–656 (VYAKKGGAAGAPPGGEAEGEPQAQAGGKKEDVVDAEFEEVKDEKKKDEDK) are disordered. Low complexity predominate over residues 620 to 632 (GGEAEGEPQAQAG). The segment covering 647–656 (KDEKKKDEDK) has biased composition (basic and acidic residues).

It belongs to the heat shock protein 70 family.

Its function is as follows. Acts as a chaperone. In Coxiella burnetii (strain CbuK_Q154) (Coxiella burnetii (strain Q154)), this protein is Chaperone protein DnaK.